A 256-amino-acid chain; its full sequence is Imidazole glycerol phosphate synthase subunit hisF1 (256 aa).

Catalysis depends on residues D12 and D131.

It belongs to the HisA/HisF family. As to quaternary structure, heterodimer of HisH and HisF.

It is found in the cytoplasm. It catalyses the reaction 5-[(5-phospho-1-deoxy-D-ribulos-1-ylimino)methylamino]-1-(5-phospho-beta-D-ribosyl)imidazole-4-carboxamide + L-glutamine = D-erythro-1-(imidazol-4-yl)glycerol 3-phosphate + 5-amino-1-(5-phospho-beta-D-ribosyl)imidazole-4-carboxamide + L-glutamate + H(+). It participates in amino-acid biosynthesis; L-histidine biosynthesis; L-histidine from 5-phospho-alpha-D-ribose 1-diphosphate: step 5/9. In terms of biological role, IGPS catalyzes the conversion of PRFAR and glutamine to IGP, AICAR and glutamate. The HisF subunit catalyzes the cyclization activity that produces IGP and AICAR from PRFAR using the ammonia provided by the HisH subunit. The sequence is that of Imidazole glycerol phosphate synthase subunit hisF1 (hisF1) from Pseudomonas aeruginosa (strain ATCC 15692 / DSM 22644 / CIP 104116 / JCM 14847 / LMG 12228 / 1C / PRS 101 / PAO1).